The following is a 249-amino-acid chain: Cobalt transport protein CbiM (249 aa).

Residues 1 to 27 (MKPLHRWLPVVIGAALLIIFESRAAYA) form the signal peptide. The next 6 membrane-spanning stretches (helical) occupy residues 33 to 53 (GFLPPVWAGFWFIVVLPFWVL), 70 to 90 (LLLGFAAAFAFVLSALKIPSV), 102 to 122 (LGTILFGPLVMSVLGSIVLLF), 134 to 154 (TLGANAFSMAVVGPFVAWLIW), 161 to 181 (APIWLTVFLAAALADLFTYVV), and 207 to 227 (IFAVTQIPLAISEGILTVLIF).

This sequence belongs to the CbiM family. In terms of assembly, forms an energy-coupling factor (ECF) transporter complex composed of an ATP-binding protein (A component, CbiO), a transmembrane protein (T component, CbiQ) and 2 possible substrate-capture proteins (S components, CbiM and CbiN) of unknown stoichimetry.

It is found in the cell membrane. Its pathway is cofactor biosynthesis; adenosylcobalamin biosynthesis. Part of the energy-coupling factor (ECF) transporter complex CbiMNOQ involved in cobalt import. In Roseiflexus sp. (strain RS-1), this protein is Cobalt transport protein CbiM.